Here is a 229-residue protein sequence, read N- to C-terminus: Cytidylate kinase (229 aa).

12 to 20 (GPSGAGKGT) contributes to the ATP binding site.

The protein belongs to the cytidylate kinase family. Type 1 subfamily.

The protein localises to the cytoplasm. It carries out the reaction CMP + ATP = CDP + ADP. It catalyses the reaction dCMP + ATP = dCDP + ADP. The polypeptide is Cytidylate kinase (Serratia proteamaculans (strain 568)).